A 446-amino-acid chain; its full sequence is tRNA-2-methylthio-N(6)-dimethylallyladenosine synthase (446 aa).

The 118-residue stretch at 3-120 (KKIYIKTFGC…LPEMLKQRRS (118 aa)) folds into the MTTase N-terminal domain. Residues C12, C49, C83, C157, C161, and C164 each contribute to the [4Fe-4S] cluster site. The 233-residue stretch at 143–375 (KVEGATAFVS…QAVIDQNTRR (233 aa)) folds into the Radical SAM core domain. The TRAM domain occupies 378–444 (DEMVGTVQRI…AYTLRGEIIV (67 aa)).

The protein belongs to the methylthiotransferase family. MiaB subfamily. As to quaternary structure, monomer. [4Fe-4S] cluster serves as cofactor.

Its subcellular location is the cytoplasm. It carries out the reaction N(6)-dimethylallyladenosine(37) in tRNA + (sulfur carrier)-SH + AH2 + 2 S-adenosyl-L-methionine = 2-methylsulfanyl-N(6)-dimethylallyladenosine(37) in tRNA + (sulfur carrier)-H + 5'-deoxyadenosine + L-methionine + A + S-adenosyl-L-homocysteine + 2 H(+). Functionally, catalyzes the methylthiolation of N6-(dimethylallyl)adenosine (i(6)A), leading to the formation of 2-methylthio-N6-(dimethylallyl)adenosine (ms(2)i(6)A) at position 37 in tRNAs that read codons beginning with uridine. The polypeptide is tRNA-2-methylthio-N(6)-dimethylallyladenosine synthase (Janthinobacterium sp. (strain Marseille) (Minibacterium massiliensis)).